A 363-amino-acid chain; its full sequence is uncharacterized protein (363 aa).

Positions 198, 225, 246, and 291 each coordinate S-adenosyl-L-methionine. Catalysis depends on Cys318, which acts as the Nucleophile.

This sequence belongs to the class I-like SAM-binding methyltransferase superfamily. RNA M5U methyltransferase family.

This is an uncharacterized protein from Mycoplasma mobile (strain ATCC 43663 / 163K / NCTC 11711) (Mesomycoplasma mobile).